Consider the following 315-residue polypeptide: Phage tubulin-like protein (315 aa).

GTP is bound by residues 12–13, 93–95, and asparagine 165; these read GT and GSG.

Belongs to the FtsZ family. PhuZ subfamily. As to quaternary structure, homomultimer. Polymerizes in a strictly GTP-dependent manner.

The protein localises to the host cytoplasm. It carries out the reaction GTP + H2O = GDP + phosphate + H(+). With respect to regulation, the non-hydrolyzable GTP analog GMPCPP stabilizes filaments, which never disassemble. Its function is as follows. A tubulin-like GTPase that forms filaments, which are required for positioning viral DNA and capsids in the middle of the host cell for optimal replication. The motor component of a partition system which pushes phage DNA (encased by protein gp105) to the center of the bacterial host cell. Also required for movement of phage capsids to the vicinity of the viral DNA and rotation of the encased viral DNA at midcell. Forms filaments during the lytic phase, which position phage DNA at the center of the bacterial host cell. Filaments have a three-stranded intertwined achitecture and form a spindle-like cytoskeleton within the infected cell. Has GTPase activity. Filaments grow at the plus end and depolymerize at the minus end, a process called treadmilling, and switch from growing in a polar manner to catastrophic depolymerization, i.e. they display dynamic instability, like tubulin. In infected host cells the filament ends close to the cell pole are relatively stable, while the other end near the phage DNA is highly dynamic. Both capsid movement and DNA rotation probably require treadmilling. This chain is Phage tubulin-like protein, found in Pseudomonas phage 201phi2-1 (Pseudomonas chlororaphis phage 201phi2-1).